Reading from the N-terminus, the 102-residue chain is Lipopolysaccharide assembly protein A (102 aa).

Residues 1 to 2 are Cytoplasmic-facing; sequence MK. The helical transmembrane segment at 3–23 threads the bilayer; sequence YLLIFLLVLAIFVISVTLGAQ. Over 24–43 the chain is Periplasmic; the sequence is NDQQVTFNYLLAQGEYRIST. The helical transmembrane segment at 44–64 threads the bilayer; the sequence is LLAVLFAAGFAIGWLICGLFW. The stretch at 64-92 forms a coiled coil; that stretch reads WLRVRVSLARAERKIKRLENQLSPATDVA. Over 65-102 the chain is Cytoplasmic; that stretch reads LRVRVSLARAERKIKRLENQLSPATDVAVVPHSSAAKE.

This sequence belongs to the LapA family.

The protein resides in the cell inner membrane. Functionally, involved in the assembly of lipopolysaccharide (LPS). In Escherichia coli (strain K12), this protein is Lipopolysaccharide assembly protein A.